The sequence spans 152 residues: Orientotoxin-1 (152 aa).

As to expression, expressed by the venom gland.

It is found in the secreted. It carries out the reaction a 1-acyl-sn-glycero-3-phosphocholine + H2O = sn-glycerol 3-phosphocholine + a fatty acid + H(+). In terms of biological role, neurotoxin of presynaptic effect which degrades lysophospholipids. This Vespa orientalis (Oriental hornet) protein is Orientotoxin-1.